We begin with the raw amino-acid sequence, 249 residues long: RING finger protein 223 (249 aa).

Residues Met1–Arg44 form a disordered region. The span at Arg17–Arg44 shows a compositional bias: low complexity. The RING-type zinc finger occupies Cys51–Arg102. The helical transmembrane segment at Leu199 to Leu219 threads the bilayer. Residues Pro230–Asn249 form a disordered region. Residues Ala235–Asn249 are compositionally biased toward low complexity.

The protein resides in the membrane. This Homo sapiens (Human) protein is RING finger protein 223 (RNF223).